Here is a 284-residue protein sequence, read N- to C-terminus: MQFFYTPNFNPIILKVGCISFYWYGMMYVLSFIFAMWFLKYRKRYIVNDIFSSTSEIENLLYLNFLGVVIGGRIGYVLFYQWSMLSQDKLWFFKLWEGGMSFHGGLIGVIISIMWFSYCKNQSFLKISDFIVPAVPVGLGLGRLGNFINGELWGRVTFDIPWAMLFKNALLQDLLTLKIHPEWKFFFDYYGALPRHPSQLYEMILEGIVLFVVIYIFSCKSRPEGSISGLFLLLYGLFRIIIEFFRQPDIHIGLINNFITLGQVLSFPMVIFGFIIMYVSYKFK.

Transmembrane regions (helical) follow at residues 19-39 (ISFYWYGMMYVLSFIFAMWFL), 60-80 (LLYLNFLGVVIGGRIGYVLFY), 98-118 (GGMSFHGGLIGVIISIMWFSY), 130-150 (FIVPAVPVGLGLGRLGNFING), 199-219 (QLYEMILEGIVLFVVIYIFSC), 225-245 (GSISGLFLLLYGLFRIIIEFF), and 258-278 (FITLGQVLSFPMVIFGFIIMY). Arginine 143 lines the a 1,2-diacyl-sn-glycero-3-phospho-(1'-sn-glycerol) pocket.

Belongs to the Lgt family.

The protein localises to the cell inner membrane. The catalysed reaction is L-cysteinyl-[prolipoprotein] + a 1,2-diacyl-sn-glycero-3-phospho-(1'-sn-glycerol) = an S-1,2-diacyl-sn-glyceryl-L-cysteinyl-[prolipoprotein] + sn-glycerol 1-phosphate + H(+). The protein operates within protein modification; lipoprotein biosynthesis (diacylglyceryl transfer). In terms of biological role, catalyzes the transfer of the diacylglyceryl group from phosphatidylglycerol to the sulfhydryl group of the N-terminal cysteine of a prolipoprotein, the first step in the formation of mature lipoproteins. This is Phosphatidylglycerol--prolipoprotein diacylglyceryl transferase from Blochmanniella floridana.